Here is a 527-residue protein sequence, read N- to C-terminus: Amidophosphoribosyltransferase (527 aa).

Residues 1-30 (MAVDSDYVTDRAAGSRQTVTGQQPEQDLNS) form a disordered region. The propeptide occupies 1-34 (MAVDSDYVTDRAAGSRQTVTGQQPEQDLNSPREE). Residues 15-29 (SRQTVTGQQPEQDLN) show a composition bias toward polar residues. C35 (nucleophile) is an active-site residue. In terms of domain architecture, Glutamine amidotransferase type-2 spans 35-261 (CGVFGVWAPG…PGELLAIDAD (227 aa)). C276 is a binding site for [4Fe-4S] cluster. 3 residues coordinate Mg(2+): S323, D385, and D386. Residues C422, C478, and C481 each coordinate [4Fe-4S] cluster.

In the C-terminal section; belongs to the purine/pyrimidine phosphoribosyltransferase family. The cofactor is Mg(2+). It depends on [4Fe-4S] cluster as a cofactor.

It catalyses the reaction 5-phospho-beta-D-ribosylamine + L-glutamate + diphosphate = 5-phospho-alpha-D-ribose 1-diphosphate + L-glutamine + H2O. It functions in the pathway purine metabolism; IMP biosynthesis via de novo pathway; N(1)-(5-phospho-D-ribosyl)glycinamide from 5-phospho-alpha-D-ribose 1-diphosphate: step 1/2. Catalyzes the formation of phosphoribosylamine from phosphoribosylpyrophosphate (PRPP) and glutamine. In Mycobacterium bovis (strain ATCC BAA-935 / AF2122/97), this protein is Amidophosphoribosyltransferase.